A 192-amino-acid polypeptide reads, in one-letter code: Orotate phosphoribosyltransferase (192 aa).

Residue 116-124 (EDIVTTGLS) coordinates 5-phospho-alpha-D-ribose 1-diphosphate. 2 residues coordinate orotate: threonine 120 and arginine 148.

Belongs to the purine/pyrimidine phosphoribosyltransferase family. PyrE subfamily. As to quaternary structure, homodimer. Mg(2+) is required as a cofactor.

The enzyme catalyses orotidine 5'-phosphate + diphosphate = orotate + 5-phospho-alpha-D-ribose 1-diphosphate. Its pathway is pyrimidine metabolism; UMP biosynthesis via de novo pathway; UMP from orotate: step 1/2. In terms of biological role, catalyzes the transfer of a ribosyl phosphate group from 5-phosphoribose 1-diphosphate to orotate, leading to the formation of orotidine monophosphate (OMP). The protein is Orotate phosphoribosyltransferase of Bartonella quintana (strain Toulouse) (Rochalimaea quintana).